The sequence spans 226 residues: DNA mismatch repair protein MutH (226 aa).

The protein belongs to the MutH family.

It is found in the cytoplasm. Its function is as follows. Sequence-specific endonuclease that cleaves unmethylated GATC sequences. It is involved in DNA mismatch repair. The chain is DNA mismatch repair protein MutH from Haemophilus ducreyi (strain 35000HP / ATCC 700724).